The following is an 83-amino-acid chain: Non-muscle caldesmon (83 aa).

Basic and acidic residues-rich tracts occupy residues 1-44 (QTSE…KEEK) and 62-76 (NQLK…KESK). A myosin and calmodulin-binding region spans residues 1-63 (QTSEKEGRSE…PKPGSIEENQ (63 aa)). A disordered region spans residues 1–83 (QTSEKEGRSE…ESKNILSLCL (83 aa)).

In terms of processing, in non-muscle cells, phosphorylation by CDC2 during mitosis causes caldesmon to dissociate from microfilaments. Phosphorylation reduces caldesmon binding to actin, myosin, and calmodulin as well as its inhibition of actomyosin ATPase activity. Phosphorylation also occurs in both quiescent and dividing smooth muscle cells with similar effects on the interaction with actin and calmodulin and on microfilaments reorganization.

The protein localises to the cytoplasm. It localises to the cytoskeleton. It is found in the myofibril. The protein resides in the stress fiber. Its function is as follows. Actin- and myosin-binding protein implicated in the regulation of actomyosin interactions in smooth muscle and nonmuscle cells (could act as a bridge between myosin and actin filaments). Stimulates actin binding of tropomyosin which increases the stabilization of actin filament structure. In muscle tissues, inhibits the actomyosin ATPase by binding to F-actin. This inhibition is attenuated by calcium-calmodulin and is potentiated by tropomyosin. Interacts with actin, myosin, two molecules of tropomyosin and with calmodulin. Also plays an essential role during cellular mitosis and receptor capping. This Bos taurus (Bovine) protein is Non-muscle caldesmon (CALD1).